The chain runs to 306 residues: Ribosome production factor 2 homolog (306 aa).

In terms of domain architecture, Brix spans 31–234 (KNAMLIKGGN…MRRTHLASDD (204 aa)). The segment at 270–306 (KQDLSKLQTRKMKGLKKRPAENGVDDQGKKSKRIKKN) is disordered. Over residues 277–286 (QTRKMKGLKK) the composition is skewed to basic residues.

This sequence belongs to the RPF2 family. Component of a hexameric 5S RNP precursor complex, composed of 5S RNA, RRS1, RPF2/BXDC1, RPL5, RPL11 and HEATR3; this complex acts as a precursor for ribosome assembly.

The protein resides in the nucleus. The protein localises to the nucleolus. In terms of biological role, involved in ribosomal large subunit assembly. May regulate the localization of the 5S RNP/5S ribonucleoprotein particle to the nucleolus. In Mus musculus (Mouse), this protein is Ribosome production factor 2 homolog (Rpf2).